Consider the following 176-residue polypeptide: Large ribosomal subunit protein uL10 (176 aa).

The protein belongs to the universal ribosomal protein uL10 family. In terms of assembly, part of the ribosomal stalk of the 50S ribosomal subunit. The N-terminus interacts with L11 and the large rRNA to form the base of the stalk. The C-terminus forms an elongated spine to which L12 dimers bind in a sequential fashion forming a multimeric L10(L12)X complex.

Forms part of the ribosomal stalk, playing a central role in the interaction of the ribosome with GTP-bound translation factors. The chain is Large ribosomal subunit protein uL10 from Leuconostoc citreum (strain KM20).